An 887-amino-acid chain; its full sequence is Transcriptional regulator DEF1 (887 aa).

Positions 1 to 13 are enriched in polar residues; it reads MERRQFNTSNIRN. Disordered regions lie at residues 1-117, 203-293, 311-330, 350-542, 555-578, 614-675, 696-758, and 813-887; these read MERR…IQPG, KRSL…ESNA, NNET…PRQL, PVLG…QQAQ, NRPP…PQQK, QAPQ…QVPK, QRTL…TQEQ, and NNAN…NLLN. Residues 57–75 are compositionally biased toward low complexity; it reads SSSQSNSVQNQDQSEDQSQ. Positions 76-107 are enriched in polar residues; the sequence is LPQQESNTQQESNTQQESNTPSPRASNTSTET. The stretch at 199-234 forms a coiled coil; that stretch reads EEMRKRSLENSRKRELEEAQEREESNKRQHTESSAE. The segment covering 203–231 has biased composition (basic and acidic residues); that stretch reads KRSLENSRKRELEEAQEREESNKRQHTES. The span at 232-254 shows a compositional bias: low complexity; the sequence is SAEPNAESSTESTTESNAESGAE. The segment covering 261-270 has biased composition (polar residues); sequence AESTTESNVE. Residues 311–326 are compositionally biased toward low complexity; that stretch reads NNETNNTGESNSTSQQ. Residues 364–393 are compositionally biased toward polar residues; sequence KTSLTGSQNKVHSTNTQQSQKHPQQILTNS. Low complexity-rich tracts occupy residues 399-408, 428-456, 475-519, and 526-542; these read QQYSAQSQQQ, QQQQ…QQEL, QQQS…QVQT, and QPQT…QQAQ. The span at 622 to 640 shows a compositional bias: low complexity; sequence YQHHYQQVQQRQNQQPYMQ. The span at 641-658 shows a compositional bias: polar residues; that stretch reads SAPTYQQPHVQTPKSTRS. A compositionally biased stretch (basic and acidic residues) spans 696–710; that stretch reads QRTLDNGREPERLRT. Residues 729–745 are compositionally biased toward polar residues; it reads RSKQSSNQKPVVKQQSS. Low complexity predominate over residues 829–844; that stretch reads TNTRGGRASTRSSGRP. Residues 865–887 show a composition bias toward polar residues; sequence TDGSQSQNSGKASKISNIRNLLN.

It localises to the nucleus. In terms of biological role, transcriptional regulator involved in extension of germ tubes into elongated hyphae and maintenance of filamentous growth. Regulates expression of UME6. Acts in a pathway that regulates maintenance of hyphal growth by repressing hyphal-to-yeast transition and allows dissemination within host epithelial tissues. Dispensable for invasion into both host oral epithelial cells and enterocytes, but required for epithelial damage. This is Transcriptional regulator DEF1 (DEF1) from Candida albicans (strain SC5314 / ATCC MYA-2876) (Yeast).